Reading from the N-terminus, the 631-residue chain is ATP-dependent zinc metalloprotease FtsH (631 aa).

Residues 1–2 (MK) lie on the Stromal side of the membrane. Residues 3–23 (ISWKNILLTLIPLGLISFLVW) traverse the membrane as a helical segment. At 24–118 (QGFNNTTNPQ…AHATNDSTPA (95 aa)) the chain is on the lumenal side. Residues 119-139 (WSLIGNLIFPILLIAGLAFLF) traverse the membrane as a helical segment. Topologically, residues 140-631 (RRSSNLPGGP…IDYKSQLKST (492 aa)) are stromal. 213–220 (GPPGTGKT) contributes to the ATP binding site. Histidine 434 contributes to the Zn(2+) binding site. The active site involves glutamate 435. 2 residues coordinate Zn(2+): histidine 438 and aspartate 512.

This sequence in the central section; belongs to the AAA ATPase family. The protein in the C-terminal section; belongs to the peptidase M41 family. Homohexamer. Zn(2+) is required as a cofactor.

The protein localises to the plastid. The protein resides in the chloroplast thylakoid membrane. Its function is as follows. Acts as a processive, ATP-dependent zinc metallopeptidase. The sequence is that of ATP-dependent zinc metalloprotease FtsH from Guillardia theta (Cryptophyte).